We begin with the raw amino-acid sequence, 663 residues long: MIDKRDDKPFKLKSKYKPSGDQPQAIESLVDNIEGGEKAQILLGATGTGKTYTMSQVISKVNKPTLVIAHNKTLAGQLYGEFKEFFPDNAVEYFVSYYDYYQPEAYVPSSDTYIEKDSSVNDEIDKLRHSATSSLLERNDVIVVASVSCIYGLGSPKEYADSAVSLRPGQEISRDTLLNQLVDIQFERNDIDFQRGCFRVRGDVVEVFPASRDEHAFRVEFFGDEIDRICEIESLTGKTIGEVDHLVLFPATHFVTNDEHMEQSIAKIQAELAEQLQLFESEGKLLEAQRLRQRTEYDIEMLREMGYTSGVENYSRHMDGRSPGEPPYTLLDFFPEDFLIMIDESHMTMGQIKGMYNGDQARKQMLVDYGFRLPSALDNRPLRREEFESHVHQIVYVSATPGEYEMSQTNTIIEQIIRPTGLLDPEIDVRPSMGQMDDLLGEINQRVARDERTFITTLTKKMAEDLTDYLKEMGVKVKYMHSDIKTLERTEIIRDLRLGVFDVLIGINLLREGIDVPEVSLVAILDADKEGFLRNERGLIQTIGRAARNVDGHVIMYADKMTDSMQRAIDETARRREIQIAYNKAHGIVPQTIKKDIRGLISISKTSHNDISKEEMDYESMSRGERKEAINALQKQMQEAAELLDFELAAQMRDLILELKLMD.

The segment covering 1–10 has biased composition (basic and acidic residues); the sequence is MIDKRDDKPF. The segment at 1-23 is disordered; it reads MIDKRDDKPFKLKSKYKPSGDQP. In terms of domain architecture, Helicase ATP-binding spans 31 to 418; that stretch reads DNIEGGEKAQ…TNTIIEQIIR (388 aa). Position 44–51 (44–51) interacts with ATP; that stretch reads GATGTGKT. Residues 97-120 carry the Beta-hairpin motif; it reads YYDYYQPEAYVPSSDTYIEKDSSV. Residues 435–601 enclose the Helicase C-terminal domain; sequence QMDDLLGEIN…TIKKDIRGLI (167 aa). In terms of domain architecture, UVR spans 627–662; it reads KEAINALQKQMQEAAELLDFELAAQMRDLILELKLM.

It belongs to the UvrB family. Forms a heterotetramer with UvrA during the search for lesions. Interacts with UvrC in an incision complex.

It localises to the cytoplasm. Functionally, the UvrABC repair system catalyzes the recognition and processing of DNA lesions. A damage recognition complex composed of 2 UvrA and 2 UvrB subunits scans DNA for abnormalities. Upon binding of the UvrA(2)B(2) complex to a putative damaged site, the DNA wraps around one UvrB monomer. DNA wrap is dependent on ATP binding by UvrB and probably causes local melting of the DNA helix, facilitating insertion of UvrB beta-hairpin between the DNA strands. Then UvrB probes one DNA strand for the presence of a lesion. If a lesion is found the UvrA subunits dissociate and the UvrB-DNA preincision complex is formed. This complex is subsequently bound by UvrC and the second UvrB is released. If no lesion is found, the DNA wraps around the other UvrB subunit that will check the other stand for damage. The sequence is that of UvrABC system protein B from Streptococcus pyogenes serotype M3 (strain ATCC BAA-595 / MGAS315).